A 142-amino-acid chain; its full sequence is UPF0102 protein Bcep18194_A3391 (142 aa).

The segment at 1–27 (MCHAAPARPGDGRGLPRAGDNFSGAAR) is disordered.

Belongs to the UPF0102 family.

The sequence is that of UPF0102 protein Bcep18194_A3391 from Burkholderia lata (strain ATCC 17760 / DSM 23089 / LMG 22485 / NCIMB 9086 / R18194 / 383).